We begin with the raw amino-acid sequence, 361 residues long: Phospho-N-acetylmuramoyl-pentapeptide-transferase (361 aa).

Transmembrane regions (helical) follow at residues 27–47 (GAIVTAVLFVFLFGPGIISTL), 72–92 (TPTMGGLMIFSGLIVATLLWA), 94–114 (LSNLYVWVVLFVTTGFGLIGF), 133–153 (ARLAIEALIAGIAVVLMINAG), 169–189 (LLLDLGWFFVVFGAFVIVAAG), 200–220 (GLAIVPVMIAAASFGMISYLS), 237–257 (VGELAVICGAIIGAGLGFLWF), 264–284 (IFMGDTGSLALGGLLGSIAVA), 289–309 (IVLAVIGGLFVLEAVSVIVQV), and 338–358 (QVVIRFWIIAVVLALLGLATL).

The protein belongs to the glycosyltransferase 4 family. MraY subfamily. Requires Mg(2+) as cofactor.

The protein localises to the cell inner membrane. The catalysed reaction is UDP-N-acetyl-alpha-D-muramoyl-L-alanyl-gamma-D-glutamyl-meso-2,6-diaminopimeloyl-D-alanyl-D-alanine + di-trans,octa-cis-undecaprenyl phosphate = di-trans,octa-cis-undecaprenyl diphospho-N-acetyl-alpha-D-muramoyl-L-alanyl-D-glutamyl-meso-2,6-diaminopimeloyl-D-alanyl-D-alanine + UMP. The protein operates within cell wall biogenesis; peptidoglycan biosynthesis. Catalyzes the initial step of the lipid cycle reactions in the biosynthesis of the cell wall peptidoglycan: transfers peptidoglycan precursor phospho-MurNAc-pentapeptide from UDP-MurNAc-pentapeptide onto the lipid carrier undecaprenyl phosphate, yielding undecaprenyl-pyrophosphoryl-MurNAc-pentapeptide, known as lipid I. In Azorhizobium caulinodans (strain ATCC 43989 / DSM 5975 / JCM 20966 / LMG 6465 / NBRC 14845 / NCIMB 13405 / ORS 571), this protein is Phospho-N-acetylmuramoyl-pentapeptide-transferase.